The primary structure comprises 508 residues: Transposase (508 aa).

The region spanning 3–65 is the HTH IS21-type domain; that stretch reads LLSVIRRWHF…PFADRLSAWL (63 aa). An Integrase catalytic domain is found at 124 to 299; sequence LAFEPGEAFQ…TIADIWVEEV (176 aa).

This sequence belongs to the transposase IS21/IS408/IS1162 family.

In terms of biological role, required for the transposition of the insertion element. In Aminobacter aminovorans (Chelatobacter heintzii), this protein is Transposase (nmoT).